A 199-amino-acid polypeptide reads, in one-letter code: Golgi to ER traffic protein 1 (199 aa).

The Lumenal portion of the chain corresponds to 1–11; it reads MLLPDLHPYTI. The helical transmembrane segment at 12–31 threads the bilayer; sequence LLSIFIVLLLKQLVASIGKS. Over 32–115 the chain is Cytoplasmic; sequence TIKEFVWLVY…SIDKVSNALL (84 aa). The stretch at 66–116 forms a coiled coil; sequence EKRAISAQDEYAKWTKLNRQADKLSAELQKLNQEIQQQKASIDKVSNALLL. The helical transmembrane segment at 116 to 136 threads the bilayer; the sequence is LVLTTLPIWVARVLYRNTHLF. At 137–160 the chain is on the lumenal side; it reads YIRQGIFPKYVEWVLALPFLPNGA. The helical transmembrane segment at 161–177 threads the bilayer; the sequence is VGLTIWMFAVNSVVSNF. Topologically, residues 178–199 are cytoplasmic; the sequence is AFLVSFPFAKKVSKPVRDTKIE.

The protein belongs to the WRB/GET1 family. As to quaternary structure, component of the Golgi to ER traffic (GET) complex, which is composed of GET1, GET2 and GET3. Within the complex, GET1 and GET2 form a heterotetramer which is stabilized by phosphatidylinositol binding and which binds to the GET3 homodimer.

The protein resides in the endoplasmic reticulum membrane. It is found in the golgi apparatus membrane. Required for the post-translational delivery of tail-anchored (TA) proteins to the endoplasmic reticulum. Together with GET2, acts as a membrane receptor for soluble GET3, which recognizes and selectively binds the transmembrane domain of TA proteins in the cytosol. The GET complex cooperates with the HDEL receptor ERD2 to mediate the ATP-dependent retrieval of resident ER proteins that contain a C-terminal H-D-E-L retention signal from the Golgi to the ER. The sequence is that of Golgi to ER traffic protein 1 from Candida dubliniensis (strain CD36 / ATCC MYA-646 / CBS 7987 / NCPF 3949 / NRRL Y-17841) (Yeast).